Here is a 348-residue protein sequence, read N- to C-terminus: Dihydroorotase (348 aa).

Positions 17 and 19 each coordinate Zn(2+). Substrate is bound by residues 19–21 (HLR) and N45. Residues K103, H140, and H178 each coordinate Zn(2+). K103 bears the N6-carboxylysine mark. H140 is a substrate binding site. L223 serves as a coordination point for substrate. D251 is a binding site for Zn(2+). Residue D251 is part of the active site. 2 residues coordinate substrate: H255 and A267.

It belongs to the metallo-dependent hydrolases superfamily. DHOase family. Class II DHOase subfamily. As to quaternary structure, homodimer. Zn(2+) serves as cofactor.

The catalysed reaction is (S)-dihydroorotate + H2O = N-carbamoyl-L-aspartate + H(+). Its pathway is pyrimidine metabolism; UMP biosynthesis via de novo pathway; (S)-dihydroorotate from bicarbonate: step 3/3. In terms of biological role, catalyzes the reversible cyclization of carbamoyl aspartate to dihydroorotate. The protein is Dihydroorotase of Escherichia coli O17:K52:H18 (strain UMN026 / ExPEC).